Consider the following 284-residue polypeptide: Bifunctional protein FolD 1 (284 aa).

NADP(+) is bound by residues 164-166 (GRS), serine 189, and isoleucine 230.

The protein belongs to the tetrahydrofolate dehydrogenase/cyclohydrolase family. As to quaternary structure, homodimer.

It catalyses the reaction (6R)-5,10-methylene-5,6,7,8-tetrahydrofolate + NADP(+) = (6R)-5,10-methenyltetrahydrofolate + NADPH. The catalysed reaction is (6R)-5,10-methenyltetrahydrofolate + H2O = (6R)-10-formyltetrahydrofolate + H(+). It participates in one-carbon metabolism; tetrahydrofolate interconversion. Functionally, catalyzes the oxidation of 5,10-methylenetetrahydrofolate to 5,10-methenyltetrahydrofolate and then the hydrolysis of 5,10-methenyltetrahydrofolate to 10-formyltetrahydrofolate. The sequence is that of Bifunctional protein FolD 1 from Rubrobacter xylanophilus (strain DSM 9941 / JCM 11954 / NBRC 16129 / PRD-1).